Here is a 306-residue protein sequence, read N- to C-terminus: Ribonuclease Z (306 aa).

Residues His-63, His-65, Asp-67, His-68, His-141, Asp-211, and His-269 each contribute to the Zn(2+) site. Asp-67 acts as the Proton acceptor in catalysis.

The protein belongs to the RNase Z family. In terms of assembly, homodimer. Requires Zn(2+) as cofactor.

It carries out the reaction Endonucleolytic cleavage of RNA, removing extra 3' nucleotides from tRNA precursor, generating 3' termini of tRNAs. A 3'-hydroxy group is left at the tRNA terminus and a 5'-phosphoryl group is left at the trailer molecule.. Its function is as follows. Zinc phosphodiesterase, which displays some tRNA 3'-processing endonuclease activity. Probably involved in tRNA maturation, by removing a 3'-trailer from precursor tRNA. The chain is Ribonuclease Z from Staphylococcus saprophyticus subsp. saprophyticus (strain ATCC 15305 / DSM 20229 / NCIMB 8711 / NCTC 7292 / S-41).